A 199-amino-acid chain; its full sequence is uncharacterized protein (199 aa).

Helical transmembrane passes span 10-32 (LTSQ…FIGY), 37-59 (VYSA…INYY), 63-80 (LIVI…FALI), 83-100 (LGLI…GVYL), 104-121 (YQVY…INLF), 126-148 (LTVL…MGIT), and 163-185 (FDAI…TGII).

It is found in the cell membrane. This is an uncharacterized protein from Archaeoglobus fulgidus (strain ATCC 49558 / DSM 4304 / JCM 9628 / NBRC 100126 / VC-16).